The chain runs to 219 residues: Glycerol-3-phosphate acyltransferase 2 (219 aa).

5 consecutive transmembrane segments (helical) span residues 1–21, 55–75, 93–113, 135–155, and 160–180; these read MVFW…GSTP, WPAL…VVFA, ALDL…AVLL, VLLA…GVAL, and IVSL…CGLE.

It belongs to the PlsY family. As to quaternary structure, probably interacts with PlsX.

It localises to the cell inner membrane. It catalyses the reaction an acyl phosphate + sn-glycerol 3-phosphate = a 1-acyl-sn-glycero-3-phosphate + phosphate. The protein operates within lipid metabolism; phospholipid metabolism. Its function is as follows. Catalyzes the transfer of an acyl group from acyl-phosphate (acyl-PO(4)) to glycerol-3-phosphate (G3P) to form lysophosphatidic acid (LPA). This enzyme utilizes acyl-phosphate as fatty acyl donor, but not acyl-CoA or acyl-ACP. The polypeptide is Glycerol-3-phosphate acyltransferase 2 (Rhizobium johnstonii (strain DSM 114642 / LMG 32736 / 3841) (Rhizobium leguminosarum bv. viciae)).